We begin with the raw amino-acid sequence, 246 residues long: UDP-2,3-diacylglucosamine hydrolase (246 aa).

Residues aspartate 8, histidine 10, aspartate 41, asparagine 79, and histidine 114 each contribute to the Mn(2+) site. 79-80 (NR) contacts substrate. The substrate site is built by aspartate 122, serine 160, lysine 164, lysine 167, and histidine 195. The Mn(2+) site is built by histidine 195 and histidine 197.

The protein belongs to the LpxH family. The cofactor is Mn(2+).

The protein resides in the cell inner membrane. The enzyme catalyses UDP-2-N,3-O-bis[(3R)-3-hydroxytetradecanoyl]-alpha-D-glucosamine + H2O = 2-N,3-O-bis[(3R)-3-hydroxytetradecanoyl]-alpha-D-glucosaminyl 1-phosphate + UMP + 2 H(+). Its pathway is glycolipid biosynthesis; lipid IV(A) biosynthesis; lipid IV(A) from (3R)-3-hydroxytetradecanoyl-[acyl-carrier-protein] and UDP-N-acetyl-alpha-D-glucosamine: step 4/6. Its function is as follows. Hydrolyzes the pyrophosphate bond of UDP-2,3-diacylglucosamine to yield 2,3-diacylglucosamine 1-phosphate (lipid X) and UMP by catalyzing the attack of water at the alpha-P atom. Involved in the biosynthesis of lipid A, a phosphorylated glycolipid that anchors the lipopolysaccharide to the outer membrane of the cell. The polypeptide is UDP-2,3-diacylglucosamine hydrolase (Tolumonas auensis (strain DSM 9187 / NBRC 110442 / TA 4)).